A 231-amino-acid chain; its full sequence is Protein OPG061 (231 aa).

This sequence belongs to the orthopoxvirus OPG058 family.

The protein localises to the host nucleus. It localises to the host nucleolus. The protein is Protein OPG061 (OPG061) of Vaccinia virus (strain L-IVP) (VACV).